The sequence spans 218 residues: 23 kDa integral membrane protein (218 aa).

At 1–12 (MATLGTGMRCLK) the chain is on the cytoplasmic side. The chain crosses the membrane as a helical span at residues 13-36 (SCVFILNIICLLCSLVLIGAGAYV). Residues 37 to 55 (EVKFSQYEANLHKVWQAAP) are Extracellular-facing. A helical membrane pass occupies residues 56–71 (IAIIVVGVVILIVSFL). The Cytoplasmic segment spans residues 72 to 82 (GCCGAIKENVC). A helical membrane pass occupies residues 83–108 (MLYMYAFFLIVLLIAELVAAIVAVVY). The Extracellular portion of the chain corresponds to 109–183 (KDKIDDEINT…SVFSAFLKRN (75 aa)). A helical transmembrane segment spans residues 184-205 (LIIVACVAFGVCFFQLLSIVIA). Topologically, residues 206–218 (CCLGQRIHDYQNV) are cytoplasmic.

The protein belongs to the tetraspanin (TM4SF) family.

Its subcellular location is the membrane. This is 23 kDa integral membrane protein from Schistosoma japonicum (Blood fluke).